A 574-amino-acid chain; its full sequence is Probable amino-acid permease meu22 (574 aa).

9 helical membrane-spanning segments follow: residues 69-89, 94-114, 173-193, 202-222, 291-311, 391-411, 412-432, 470-490, and 498-518; these read MIAI…NALA, ASIL…TSAL, GPVS…NIWG, FFLS…SIII, IFWR…LVVP, PIYA…TEAG, VGGA…TFIW, GVAM…FPIG, and FFQA…WKFF.

It belongs to the amino acid-polyamine-organocation (APC) superfamily.

It localises to the membrane. In Schizosaccharomyces pombe (strain 972 / ATCC 24843) (Fission yeast), this protein is Probable amino-acid permease meu22 (meu22).